The primary structure comprises 198 residues: Segregation and condensation protein B (198 aa).

The protein belongs to the ScpB family. In terms of assembly, homodimer. Homodimerization may be required to stabilize the binding of ScpA to the Smc head domains. Component of a cohesin-like complex composed of ScpA, ScpB and the Smc homodimer, in which ScpA and ScpB bind to the head domain of Smc. The presence of the three proteins is required for the association of the complex with DNA.

The protein resides in the cytoplasm. Its function is as follows. Participates in chromosomal partition during cell division. May act via the formation of a condensin-like complex containing Smc and ScpA that pull DNA away from mid-cell into both cell halves. The polypeptide is Segregation and condensation protein B (Acetivibrio thermocellus (strain ATCC 27405 / DSM 1237 / JCM 9322 / NBRC 103400 / NCIMB 10682 / NRRL B-4536 / VPI 7372) (Clostridium thermocellum)).